A 470-amino-acid polypeptide reads, in one-letter code: Trigger factor (470 aa).

One can recognise a PPIase FKBP-type domain in the interval 164–243; that stretch reads GDYVVIDMTA…VTAVKVQELP (80 aa). Acidic residues-rich tracts occupy residues 424-438 and 445-470; these read ETDAEDAAEGVESVE and AEDDAEETSDEPAAEDTATEDEAAKA. Residues 424 to 470 form a disordered region; it reads ETDAEDAAEGVESVEVDLSAAAEDDAEETSDEPAAEDTATEDEAAKA.

Belongs to the FKBP-type PPIase family. Tig subfamily.

The protein localises to the cytoplasm. The enzyme catalyses [protein]-peptidylproline (omega=180) = [protein]-peptidylproline (omega=0). Its function is as follows. Involved in protein export. Acts as a chaperone by maintaining the newly synthesized protein in an open conformation. Functions as a peptidyl-prolyl cis-trans isomerase. This Beutenbergia cavernae (strain ATCC BAA-8 / DSM 12333 / CCUG 43141 / JCM 11478 / NBRC 16432 / NCIMB 13614 / HKI 0122) protein is Trigger factor.